We begin with the raw amino-acid sequence, 505 residues long: MDPENKKSATGAAAILDLDPDFEPQSRPRSCTWPLPRPDLATEPHEPSEVEPSLGQKVPTEGHSEPILLPSRLPEPAGGPQPGILGAVTGPRKGGSRRNAWGNQSYAELISQAIESAPEKRLTLAQIYEWMVRTVPYFKDKGDSNSSAGWKNSIRHNLSLHSKFIKVHNEATGKSSWWMLNPDGGKGGKAPRRRAASMDSSSKLLRGRSKGPKKKPSVLPAPPEGATPRSPLGHFAKWSSSPCPRNREEADVWTTFRPRSSSNASTVSTRLSPMRPESEVLAEEEMPASASSYAGGVPPTLSEDLELLDGLNLASPHSLLSRSGLSGFSLQHPGLAGPLHSYGASLFGPIDGSLSAGEGCFSSSQSLEALLTSDTPPPPADVLMTQVDPILSQAPTLLLLGGMPSSSKLGTGVSLCPTPLEGPGPSNLVPNLSVMAPPPVMAGAPIPKVLGTPVLASPTEDSSHDRMPQDLDLDMYMENLECDMDNIISDLMDGEGLDFNFEPDP.

3 disordered regions span residues 1 to 66, 175 to 244, and 257 to 276; these read MDPE…HSEP, SSWW…SPCP, and RPRS…PMRP. Thr-32 carries the post-translational modification Phosphothreonine; by PKB/AKT1. The interval 97 to 215 is required for interaction with FOXK1; sequence RRNAWGNQSY…RGRSKGPKKK (119 aa). Residues 100-188 constitute a DNA-binding region (fork-head); sequence AWGNQSYAEL…MLNPDGGKGG (89 aa). Ser-197 bears the Phosphoserine; by PKB/AKT1 mark. Over residues 205 to 216 the composition is skewed to basic residues; it reads LRGRSKGPKKKP. The segment covering 257 to 271 has biased composition (polar residues); it reads RPRSSSNASTVSTRL. Residue Ser-262 is modified to Phosphoserine; by PKB/AKT1.

As to quaternary structure, interacts with CREBBP/CBP, MYOCD, SIRT1, SRF and YWHAZ. Acetylated by CREBBP/CBP and deacetylated by SIRT1. Binding of YWHAZ inhibits DNA-binding. Interacts with USP7; the interaction is enhanced in presence of hydrogen peroxide and occurs independently of TP53. Interacts with NLK, and this inhibits monoubiquitination and transcriptional activity. Interacts with FOXK1; the interaction inhibits MEF2C transactivation activity. Post-translationally, acetylation by CREBBP/CBP is induced by oxidative stress and inhibits transcriptional activity. Deacetylation by SIRT1 is NAD-dependent and stimulates transcriptional activity. In terms of processing, phosphorylation by PKB/AKT1 inhibits transcriptional activity and is responsible for cytoplasmic localization. May be phosphorylated at multiple sites by NLK. Monoubiquitinated; monoubiquitination is induced by oxidative stress and reduced by deacetylase inhibitors; results in its relocalization to the nucleus and its increased transcriptional activity. Deubiquitinated by USP7; deubiquitination is induced by oxidative stress; enhances its interaction with USP7 and consequently, deubiquitination; increases its translocation to the cytoplasm and inhibits its transcriptional activity. Hydrogene-peroxide-induced ubiquitination and USP7-mediated deubiquitination have no major effect on its protein stability. In terms of tissue distribution, strongly expressed in brown adipose tissue and weakly in white adipose tissue (at protein level). Expressed in skeletal muscle.

It localises to the cytoplasm. Its subcellular location is the nucleus. Transcription factor involved in the regulation of the insulin signaling pathway. Binds to insulin-response elements (IREs) and can activate transcription of IGFBP1. Down-regulates expression of HIF1A and suppresses hypoxia-induced transcriptional activation of HIF1A-modulated genes. Also involved in negative regulation of the cell cycle. Involved in increased proteasome activity in embryonic stem cells (ESCs) by activating expression of PSMD11 in ESCs, leading to enhanced assembly of the 26S proteasome, followed by higher proteasome activity. Represses smooth muscle cell differentiation by inhibiting the transcriptional coactivator activity of myocardin. The protein is Forkhead box protein O4 (Foxo4) of Mus musculus (Mouse).